We begin with the raw amino-acid sequence, 184 residues long: ATP synthase subunit b, chloroplastic (184 aa).

The chain crosses the membrane as a helical span at residues 27-49 (LATNPINLSVVLGVLVFFGKGVL).

The protein belongs to the ATPase B chain family. In terms of assembly, F-type ATPases have 2 components, F(1) - the catalytic core - and F(0) - the membrane proton channel. F(1) has five subunits: alpha(3), beta(3), gamma(1), delta(1), epsilon(1). F(0) has four main subunits: a(1), b(1), b'(1) and c(10-14). The alpha and beta chains form an alternating ring which encloses part of the gamma chain. F(1) is attached to F(0) by a central stalk formed by the gamma and epsilon chains, while a peripheral stalk is formed by the delta, b and b' chains.

Its subcellular location is the plastid. It localises to the chloroplast thylakoid membrane. Functionally, f(1)F(0) ATP synthase produces ATP from ADP in the presence of a proton or sodium gradient. F-type ATPases consist of two structural domains, F(1) containing the extramembraneous catalytic core and F(0) containing the membrane proton channel, linked together by a central stalk and a peripheral stalk. During catalysis, ATP synthesis in the catalytic domain of F(1) is coupled via a rotary mechanism of the central stalk subunits to proton translocation. In terms of biological role, component of the F(0) channel, it forms part of the peripheral stalk, linking F(1) to F(0). The protein is ATP synthase subunit b, chloroplastic of Phaseolus vulgaris (Kidney bean).